The following is a 318-amino-acid chain: Ubiquitin-like domain-containing CTD phosphatase 1 (318 aa).

A Ubiquitin-like domain is found at 3-81 (VSVIIKWGGQ…IMMMGTREES (79 aa)). The FCP1 homology domain occupies 133–294 (PRPGKRLLVL…YKLSQYLKEI (162 aa)). Mg(2+)-binding residues include aspartate 143, aspartate 145, and aspartate 253.

Mg(2+) serves as cofactor.

Its subcellular location is the nucleus. It carries out the reaction O-phospho-L-seryl-[protein] + H2O = L-seryl-[protein] + phosphate. It catalyses the reaction O-phospho-L-threonyl-[protein] + H2O = L-threonyl-[protein] + phosphate. Functionally, dephosphorylates 26S nuclear proteasomes, thereby decreasing their proteolytic activity. Recruited to the 19S regulatory particle of the 26S proteasome where it dephosphorylates 19S component psmc2 which impairs psmc2 ATPase activity and disrupts 26S proteasome assembly. Has also been reported to stimulate the proteolytic activity of the 26S proteasome. This chain is Ubiquitin-like domain-containing CTD phosphatase 1 (ublcp1), found in Danio rerio (Zebrafish).